Here is a 529-residue protein sequence, read N- to C-terminus: Interleukin-21 receptor (529 aa).

An N-terminal signal peptide occupies residues 1–19; the sequence is MPRGPVAALLLLILHGAWS. 3 cysteine pairs are disulfide-bonded: Cys-20/Cys-109, Cys-25/Cys-35, and Cys-65/Cys-81. At 20-237 the chain is on the extracellular side; the sequence is CLDLTCYTDY…GEPEAGWDPH (218 aa). 2 Fibronectin type-III domains span residues 21 to 118 and 119 to 228; these read LDLT…AESI and KPAP…TQAG. 5 N-linked (GlcNAc...) asparagine glycosylation sites follow: Asn-73, Asn-97, Asn-104, Asn-125, and Asn-182. A glycan (C-linked (Man) tryptophan) is linked at Trp-214. The WSXWS motif signature appears at 214–218; that stretch reads WSEWS. A helical membrane pass occupies residues 238 to 258; sequence MLLLLAVLIIVLVFMGLKIHL. Residues 259–529 are Cytoplasmic-facing; sequence PWRLWKKIWA…PPVDSGAQSS (271 aa). The short motif at 266–274 is the Box 1 motif element; that stretch reads IWAPVPTPE. The segment at 458-529 is disordered; the sequence is TADPTWRTGS…PPVDSGAQSS (72 aa).

This sequence belongs to the type I cytokine receptor family. Type 4 subfamily. As to quaternary structure, heterodimer with the common gamma subunit. Associates with JAK1. In terms of processing, C-mannosylated at Trp-214 in the WSXWS motif, the sugar chain makes extensive hydrogen bonds with Asn-73 sugar, and bridges the two fibronectin domains transforming the V-shaped receptor into an A-frame. In terms of tissue distribution, selectively expressed in lymphoid tissues. Most highly expressed in thymus and spleen.

It is found in the membrane. This is a receptor for interleukin-21. The polypeptide is Interleukin-21 receptor (Il21r) (Mus musculus (Mouse)).